A 434-amino-acid polypeptide reads, in one-letter code: Eukaryotic peptide chain release factor subunit 1-1 (434 aa).

This sequence belongs to the eukaryotic release factor 1 family. Heterodimer of two subunits, one of which binds GTP.

Its subcellular location is the cytoplasm. Directs the termination of nascent peptide synthesis (translation) in response to the termination codons UAA, UAG and UGA. Modulates plant growth and development. The sequence is that of Eukaryotic peptide chain release factor subunit 1-1 from Brassica oleracea var. botrytis (Cauliflower).